Here is a 465-residue protein sequence, read N- to C-terminus: Cysteine--tRNA ligase (465 aa).

C30 is a Zn(2+) binding site. The 'HIGH' region motif lies at 32–42 (ITVYDYCHVGH). C214, H239, and E243 together coordinate Zn(2+). The short motif at 271 to 275 (KMSKS) is the 'KMSKS' region element. K274 serves as a coordination point for ATP.

This sequence belongs to the class-I aminoacyl-tRNA synthetase family. As to quaternary structure, monomer. Zn(2+) serves as cofactor.

The protein localises to the cytoplasm. The catalysed reaction is tRNA(Cys) + L-cysteine + ATP = L-cysteinyl-tRNA(Cys) + AMP + diphosphate. This chain is Cysteine--tRNA ligase, found in Burkholderia cenocepacia (strain ATCC BAA-245 / DSM 16553 / LMG 16656 / NCTC 13227 / J2315 / CF5610) (Burkholderia cepacia (strain J2315)).